The chain runs to 317 residues: Glucose-6-phosphate isomerase, cytosolic 2B (317 aa).

E108 acts as the Proton donor in catalysis. Catalysis depends on residues H139 and K264.

Belongs to the GPI family. Homodimer.

The protein resides in the cytoplasm. It carries out the reaction alpha-D-glucose 6-phosphate = beta-D-fructose 6-phosphate. Its pathway is carbohydrate degradation; glycolysis; D-glyceraldehyde 3-phosphate and glycerone phosphate from D-glucose: step 2/4. This chain is Glucose-6-phosphate isomerase, cytosolic 2B (PGIC2-B), found in Clarkia lewisii (Farewell-to-spring).